The sequence spans 372 residues: Germination protease (372 aa).

The propeptide occupies 1-15 (MVKELNLEQYNVRTD).

This sequence belongs to the peptidase A25 family. As to quaternary structure, homotetramer. Autoproteolytically processed. The inactive tetrameric zymogen termed p46 autoprocesses to a smaller form termed p41, which is active only during spore germination.

The enzyme catalyses Endopeptidase action with P4 Glu or Asp, P1 preferably Glu &gt; Asp, P1' hydrophobic and P2' Ala.. Its function is as follows. Initiates the rapid degradation of small, acid-soluble proteins during spore germination. This Halalkalibacterium halodurans (strain ATCC BAA-125 / DSM 18197 / FERM 7344 / JCM 9153 / C-125) (Bacillus halodurans) protein is Germination protease.